The chain runs to 37 residues: Large ribosomal subunit protein bL36 (37 aa).

This sequence belongs to the bacterial ribosomal protein bL36 family.

The sequence is that of Large ribosomal subunit protein bL36 from Hydrogenobaculum sp. (strain Y04AAS1).